A 188-amino-acid chain; its full sequence is Ribosomal RNA small subunit methyltransferase G (188 aa).

Residues Gly69, Phe74, 119-120 (VQ), and Arg134 each bind S-adenosyl-L-methionine.

It belongs to the methyltransferase superfamily. RNA methyltransferase RsmG family.

It is found in the cytoplasm. The catalysed reaction is guanosine(527) in 16S rRNA + S-adenosyl-L-methionine = N(7)-methylguanosine(527) in 16S rRNA + S-adenosyl-L-homocysteine. Specifically methylates the N7 position of guanine in position 527 of 16S rRNA. The protein is Ribosomal RNA small subunit methyltransferase G of Campylobacter jejuni subsp. doylei (strain ATCC BAA-1458 / RM4099 / 269.97).